We begin with the raw amino-acid sequence, 187 residues long: Large ribosomal subunit protein mL49 (187 aa).

This sequence belongs to the mitochondrion-specific ribosomal protein mL49 family.

It is found in the mitochondrion. The sequence is that of Large ribosomal subunit protein mL49 (mrpl-49) from Caenorhabditis elegans.